Reading from the N-terminus, the 507-residue chain is Dolichyl pyrophosphate Man9GlcNAc2 alpha-1,3-glucosyltransferase (507 aa).

The Cytoplasmic portion of the chain corresponds to 1–3; the sequence is MEK. Residues 4 to 24 traverse the membrane as a helical segment; it reads WYLMTVVVLIGLTVRWTVSLN. Residues 25-114 are Lumenal-facing; it reads SYSGAGKPPM…SQAHKLFMRT (90 aa). Asparagine 59 carries N-linked (GlcNAc...) asparagine glycosylation. A helical transmembrane segment spans residues 115 to 135; sequence TVLIADLLIYIPAVVLYCCCL. The Cytoplasmic portion of the chain corresponds to 136–143; sequence KEISTKKK. Residues 144-164 form a helical membrane-spanning segment; it reads IANALCILLYPGLILIDYGHF. Topologically, residues 165-172 are lumenal; that stretch reads QYNSVSLG. Residues 173–193 form a helical membrane-spanning segment; that stretch reads FALWGVLGISCDCDLLGSLAF. Topologically, residues 194–226 are cytoplasmic; that stretch reads CLAINYKQMELYHALPFFCFLLGKCFKKGLKGK. Residues 227-247 traverse the membrane as a helical segment; the sequence is GFVLLVKLACIVVASFVLCWL. Residues 248-297 lie on the Lumenal side of the membrane; it reads PFFTEREQTLQVLRRLFPVDRGLFEDKVANIWCSFNVFLKIKDILPRHIQ. The helical transmembrane segment at 298–318 threads the bilayer; it reads LIMSFCFTFLSLLPACIKLIL. Residues 319-323 are Cytoplasmic-facing; it reads QPSSK. Residues 324–344 form a helical membrane-spanning segment; sequence GFKFTLVSCALSFFLFSFQVH. Over 345–361 the chain is Lumenal; it reads EKSILLVSLPVCLVLSE. A helical membrane pass occupies residues 362 to 382; the sequence is IPFMSTWFLLVSTFSMLPLLL. Topologically, residues 383–387 are cytoplasmic; that stretch reads KDELL. Residues 388–408 form a helical membrane-spanning segment; that stretch reads MPSVVTTMAFFIACVTSFSIF. Residues 409–437 are Lumenal-facing; that stretch reads EKTSEEELQLKSFSISVRKYLPCFTFLSR. A helical transmembrane segment spans residues 438–458; sequence IIQYLFLISVITMVLLTLMTV. The Cytoplasmic portion of the chain corresponds to 459-473; that stretch reads TLGPPQKLPDLFSVL. Residues 474-494 form a helical membrane-spanning segment; the sequence is VCFVSCLNFLFFLVYFNIIIV. The Lumenal portion of the chain corresponds to 495-507; that stretch reads WDSKSGRNQKKIS.

Belongs to the ALG6/ALG8 glucosyltransferase family.

The protein localises to the endoplasmic reticulum membrane. The enzyme catalyses an alpha-D-Man-(1-&gt;2)-alpha-D-Man-(1-&gt;2)-alpha-D-Man-(1-&gt;3)-[alpha-D-Man-(1-&gt;2)-alpha-D-Man-(1-&gt;3)-[alpha-D-Man-(1-&gt;2)-alpha-D-Man-(1-&gt;6)]-alpha-D-Man-(1-&gt;6)]-beta-D-Man-(1-&gt;4)-beta-D-GlcNAc-(1-&gt;4)-alpha-D-GlcNAc-diphospho-di-trans,poly-cis-dolichol + a di-trans,poly-cis-dolichyl beta-D-glucosyl phosphate = an alpha-D-Glc-(1-&gt;3)-alpha-D-Man-(1-&gt;2)-alpha-D-Man-(1-&gt;2)-alpha-D-Man-(1-&gt;3)-[alpha-D-Man-(1-&gt;2)-alpha-D-Man-(1-&gt;3)-[alpha-D-Man-(1-&gt;2)-alpha-D-Man-(1-&gt;6)]-alpha-D-Man-(1-&gt;6)]-beta-D-Man-(1-&gt;4)-beta-D-GlcNAc-(1-&gt;4)-alpha-D-GlcNAc-diphospho-di-trans,poly-cis-dolichol + a di-trans,poly-cis-dolichyl phosphate + H(+). The protein operates within protein modification; protein glycosylation. Functionally, dolichyl pyrophosphate Man9GlcNAc2 alpha-1,3-glucosyltransferase that operates in the biosynthetic pathway of dolichol-linked oligosaccharides, the glycan precursors employed in protein asparagine (N)-glycosylation. The assembly of dolichol-linked oligosaccharides begins on the cytosolic side of the endoplasmic reticulum membrane and finishes in its lumen. The sequential addition of sugars to dolichol pyrophosphate produces dolichol-linked oligosaccharides containing fourteen sugars, including two GlcNAcs, nine mannoses and three glucoses. Once assembled, the oligosaccharide is transferred from the lipid to nascent proteins by oligosaccharyltransferases. In the lumen of the endoplasmic reticulum, adds the first glucose residue from dolichyl phosphate glucose (Dol-P-Glc) onto the lipid-linked oligosaccharide intermediate Man(9)GlcNAc(2)-PP-Dol to produce Glc(1)Man(9)GlcNAc(2)-PP-Dol. Glc(1)Man(9)GlcNAc(2)-PP-Dol is a substrate for ALG8, the following enzyme in the biosynthetic pathway. This chain is Dolichyl pyrophosphate Man9GlcNAc2 alpha-1,3-glucosyltransferase, found in Pongo abelii (Sumatran orangutan).